The sequence spans 542 residues: Glutamyl-tRNA(Gln) amidotransferase subunit B, mitochondrial (542 aa).

It belongs to the GatB/GatE family. GatB subfamily. As to quaternary structure, subunit of the heterotrimeric GatFAB amidotransferase (AdT) complex, composed of A, B and F subunits.

Its subcellular location is the mitochondrion. It carries out the reaction L-glutamyl-tRNA(Gln) + L-glutamine + ATP + H2O = L-glutaminyl-tRNA(Gln) + L-glutamate + ADP + phosphate + H(+). Functionally, allows the formation of correctly charged Gln-tRNA(Gln) through the transamidation of misacylated Glu-tRNA(Gln) in the mitochondria. The reaction takes place in the presence of glutamine and ATP through an activated gamma-phospho-Glu-tRNA(Gln). The polypeptide is Glutamyl-tRNA(Gln) amidotransferase subunit B, mitochondrial (Candida glabrata (strain ATCC 2001 / BCRC 20586 / JCM 3761 / NBRC 0622 / NRRL Y-65 / CBS 138) (Yeast)).